A 378-amino-acid chain; its full sequence is Dual-specificity RNA methyltransferase RlmN (378 aa).

E95 functions as the Proton acceptor in the catalytic mechanism. In terms of domain architecture, Radical SAM core spans E101–D345. A disulfide bridge links C108 with C350. [4Fe-4S] cluster is bound by residues C115, C119, and C122. S-adenosyl-L-methionine-binding positions include G176–E177, S208, S230–H232, and N307. The S-methylcysteine intermediate role is filled by C350.

Belongs to the radical SAM superfamily. RlmN family. It depends on [4Fe-4S] cluster as a cofactor.

Its subcellular location is the cytoplasm. It catalyses the reaction adenosine(2503) in 23S rRNA + 2 reduced [2Fe-2S]-[ferredoxin] + 2 S-adenosyl-L-methionine = 2-methyladenosine(2503) in 23S rRNA + 5'-deoxyadenosine + L-methionine + 2 oxidized [2Fe-2S]-[ferredoxin] + S-adenosyl-L-homocysteine. It carries out the reaction adenosine(37) in tRNA + 2 reduced [2Fe-2S]-[ferredoxin] + 2 S-adenosyl-L-methionine = 2-methyladenosine(37) in tRNA + 5'-deoxyadenosine + L-methionine + 2 oxidized [2Fe-2S]-[ferredoxin] + S-adenosyl-L-homocysteine. Its function is as follows. Specifically methylates position 2 of adenine 2503 in 23S rRNA and position 2 of adenine 37 in tRNAs. m2A2503 modification seems to play a crucial role in the proofreading step occurring at the peptidyl transferase center and thus would serve to optimize ribosomal fidelity. The sequence is that of Dual-specificity RNA methyltransferase RlmN from Burkholderia thailandensis (strain ATCC 700388 / DSM 13276 / CCUG 48851 / CIP 106301 / E264).